The primary structure comprises 141 residues: Hemoglobin subunit alpha (141 aa).

A Globin domain is found at 1-141 (VLSPADKTNV…VSTVLTSKYR (141 aa)). A Phosphoserine modification is found at S3. Position 7 is an N6-succinyllysine (K7). At T8 the chain carries Phosphothreonine. The residue at position 11 (K11) is an N6-succinyllysine. K16 is subject to N6-acetyllysine; alternate. An N6-succinyllysine; alternate modification is found at K16. Y24 bears the Phosphotyrosine mark. Position 35 is a phosphoserine (S35). Residue K40 is modified to N6-succinyllysine. A Phosphoserine modification is found at S49. H58 is a binding site for O2. H87 contributes to the heme b binding site. At S102 the chain carries Phosphoserine. T108 is modified (phosphothreonine). Phosphoserine occurs at positions 124 and 131. Phosphothreonine is present on residues T134 and T137. At S138 the chain carries Phosphoserine.

This sequence belongs to the globin family. Heterotetramer of two alpha chains and two beta chains. In terms of tissue distribution, red blood cells.

Its function is as follows. Involved in oxygen transport from the lung to the various peripheral tissues. In terms of biological role, hemopressin acts as an antagonist peptide of the cannabinoid receptor CNR1. Hemopressin-binding efficiently blocks cannabinoid receptor CNR1 and subsequent signaling. The polypeptide is Hemoglobin subunit alpha (HBA) (Semnopithecus entellus (Northern plains gray langur)).